The sequence spans 490 residues: Lignostilbene-alpha,beta-dioxygenase isozyme III (490 aa).

Fe cation is bound by residues H167, H218, H285, and H477.

This sequence belongs to the carotenoid oxygenase family. In terms of assembly, homodimer of two beta subunits. Fe(2+) is required as a cofactor.

The enzyme catalyses 1,2-bis(4-hydroxy-3-methoxyphenyl)ethylene + O2 = 2 vanillin. Activity is high with beta-5 type stilbene and minimal with beta-1 type stilbene. A 4-hydroxyl group and trans-stilbene structure is essential for the binding of substrates to the enzyme. Functionally, catalyzes the cleavage of the interphenyl double bond (C alpha-C beta) of lignin-derived polyphenolic diaryl-propane type compounds (Stilbene). The polypeptide is Lignostilbene-alpha,beta-dioxygenase isozyme III (Sphingomonas paucimobilis (Pseudomonas paucimobilis)).